The sequence spans 61 residues: Large ribosomal subunit protein bL32 (61 aa).

This sequence belongs to the bacterial ribosomal protein bL32 family.

The protein is Large ribosomal subunit protein bL32 of Ehrlichia canis (strain Jake).